The following is a 635-amino-acid chain: CCR4-NOT transcription complex subunit 10 (635 aa).

T45 bears the Phosphothreonine mark. Residues 131 to 165 (LVARLEALEKAMAALVATLQLQLLLATNQLNRAEA) adopt a coiled-coil conformation. Disordered stretches follow at residues 396 to 416 (EERQSQSETPSTKPYAPQSAG) and 450 to 474 (SEDVEAPEPKDPTQESWRHPQDNNF). Positions 456–470 (PEPKDPTQESWRHPQ) are enriched in basic and acidic residues.

Belongs to the CNOT10 family. As to quaternary structure, component of the CCR4-NOT complex. CNOT10 and CNOT11 form a subcomplex docked to the CNOT1 scaffold.

The protein localises to the cytoplasm. Its subcellular location is the nucleus. Functionally, component of the CCR4-NOT complex which is one of the major cellular mRNA deadenylases and is linked to various cellular processes including bulk mRNA degradation, miRNA-mediated repression, translational repression during translational initiation and general transcription regulation. Additional complex functions may be a consequence of its influence on mRNA expression. Is not required for association of CNOT7 to the CCR4-NOT complex. In Drosophila melanogaster (Fruit fly), this protein is CCR4-NOT transcription complex subunit 10 (Not10).